Consider the following 222-residue polypeptide: CCA-adding enzyme (222 aa).

ATP-binding residues include S50 and K53. CTP is bound by residues S50 and K53. Mg(2+) is bound by residues D61, D63, and D112. Positions 135, 155, and 164 each coordinate ATP. Residues H135, K155, and Y164 each contribute to the CTP site.

The protein belongs to the tRNA nucleotidyltransferase/poly(A) polymerase family. Archaeal CCA-adding enzyme subfamily. Homodimer. Mg(2+) serves as cofactor.

The enzyme catalyses a tRNA precursor + 2 CTP + ATP = a tRNA with a 3' CCA end + 3 diphosphate. It carries out the reaction a tRNA with a 3' CCA end + 2 CTP + ATP = a tRNA with a 3' CCACCA end + 3 diphosphate. Its function is as follows. Catalyzes the addition and repair of the essential 3'-terminal CCA sequence in tRNAs without using a nucleic acid template. Adds these three nucleotides in the order of C, C, and A to the tRNA nucleotide-73, using CTP and ATP as substrates and producing inorganic pyrophosphate. tRNA 3'-terminal CCA addition is required both for tRNA processing and repair. Also involved in tRNA surveillance by mediating tandem CCA addition to generate a CCACCA at the 3' terminus of unstable tRNAs. While stable tRNAs receive only 3'-terminal CCA, unstable tRNAs are marked with CCACCA and rapidly degraded. This Thermoplasma acidophilum protein is CCA-adding enzyme.